The chain runs to 64 residues: Beta sliding clamp (64 aa).

This sequence belongs to the beta sliding clamp family. Forms a ring-shaped head-to-tail homodimer around DNA which binds and tethers DNA polymerases and other proteins to the DNA. The DNA replisome complex has a single clamp-loading complex (3 tau and 1 each of delta, delta', psi and chi subunits) which binds 3 Pol III cores (1 core on the leading strand and 2 on the lagging strand) each with a beta sliding clamp dimer. Additional proteins in the replisome are other copies of gamma, psi and chi, Ssb, DNA helicase and RNA primase.

The protein localises to the cytoplasm. In terms of biological role, confers DNA tethering and processivity to DNA polymerases and other proteins. Acts as a clamp, forming a ring around DNA (a reaction catalyzed by the clamp-loading complex) which diffuses in an ATP-independent manner freely and bidirectionally along dsDNA. Initially characterized for its ability to contact the catalytic subunit of DNA polymerase III (Pol III), a complex, multichain enzyme responsible for most of the replicative synthesis in bacteria; Pol III exhibits 3'-5' exonuclease proofreading activity. The beta chain is required for initiation of replication as well as for processivity of DNA replication. This is Beta sliding clamp (dnaN) from Actinobacillus pleuropneumoniae (Haemophilus pleuropneumoniae).